A 418-amino-acid chain; its full sequence is Glutamyl-tRNA(Gln) amidotransferase subunit D (418 aa).

Residues 74 to 405 (KNISILSTGG…EEAKELMPKN (332 aa)) form the Asparaginase/glutaminase domain. Catalysis depends on residues T84, T160, D161, and K237.

It belongs to the asparaginase 1 family. GatD subfamily. In terms of assembly, heterodimer of GatD and GatE.

It catalyses the reaction L-glutamyl-tRNA(Gln) + L-glutamine + ATP + H2O = L-glutaminyl-tRNA(Gln) + L-glutamate + ADP + phosphate + H(+). In terms of biological role, allows the formation of correctly charged Gln-tRNA(Gln) through the transamidation of misacylated Glu-tRNA(Gln) in organisms which lack glutaminyl-tRNA synthetase. The reaction takes place in the presence of glutamine and ATP through an activated gamma-phospho-Glu-tRNA(Gln). The GatDE system is specific for glutamate and does not act on aspartate. This Methanococcus maripaludis (strain C6 / ATCC BAA-1332) protein is Glutamyl-tRNA(Gln) amidotransferase subunit D.